The sequence spans 103 residues: Large ribosomal subunit protein bL21 (103 aa).

This sequence belongs to the bacterial ribosomal protein bL21 family. Part of the 50S ribosomal subunit. Contacts protein L20.

In terms of biological role, this protein binds to 23S rRNA in the presence of protein L20. This Shewanella pealeana (strain ATCC 700345 / ANG-SQ1) protein is Large ribosomal subunit protein bL21.